The chain runs to 228 residues: MLTRKQRDLLEFIHKRMQRDGVPPSFDEMKEALDLRSKSGIHRLITALEERGFIRRLAHRARAIEIVKMPDAMTGGGFEPRVIDGDRGPAPANAMAVRAAPAREVPVMGQIAAGVPIEAISQVASHVAVPEQMLGAGGNHYALEVKGDSMIDAGINDGDIVVIEEGNTADNGDIVVALVEDHEATLKRLRRKGGMIALEAANPAYETRVFRDDQVKVQGKLVGLIRTY.

Residues 26 to 46 (FDEMKEALDLRSKSGIHRLIT) constitute a DNA-binding region (H-T-H motif). Catalysis depends on for autocatalytic cleavage activity residues serine 149 and lysine 187.

It belongs to the peptidase S24 family. As to quaternary structure, homodimer.

The enzyme catalyses Hydrolysis of Ala-|-Gly bond in repressor LexA.. In terms of biological role, represses a number of genes involved in the response to DNA damage (SOS response), including recA and lexA. In the presence of single-stranded DNA, RecA interacts with LexA causing an autocatalytic cleavage which disrupts the DNA-binding part of LexA, leading to derepression of the SOS regulon and eventually DNA repair. This chain is LexA repressor, found in Jannaschia sp. (strain CCS1).